Here is a 73-residue protein sequence, read N- to C-terminus: Serine rich endogenous peptide 1 (73 aa).

The N-terminal stretch at 1-28 (MGMSGSSGLVHVLMLLLLLSILFHHTES) is a signal peptide. The interval 48 to 73 (YKPNTAVETPPSRSRRGGGGQNTGAD) is disordered. The SCOOP motif signature appears at 53–67 (AVETPPSRSRRGGGG). The SxS motif essential for MIK2 binding motif lies at 59-61 (SRS). The segment covering 64-73 (GGGGQNTGAD) has biased composition (gly residues).

This sequence belongs to the serine rich endogenous peptide (SCOOP) phytocytokine family. Interacts with MIK2 (via extracellular leucine-rich repeat domain); this interaction triggers the formation of complex between MIK2 and the BAK1/SERK3 and SERK4 coreceptors, and subsequent BAK1 activation by phosphorylation. As to expression, mostly expressed in leaves and flowers, and, to a lower extent, in seedlings shoots.

The protein localises to the cell membrane. The protein resides in the secreted. Its subcellular location is the extracellular space. It is found in the apoplast. Its function is as follows. Brassicaceae-specific phytocytokine (plant endogenous peptide released into the apoplast) perceived by MIK2 in a BAK1/SERK3 and SERK4 coreceptors-dependent manner, that modulates various physiological and antimicrobial processes including growth prevention and reactive oxygen species (ROS) response regulation. The polypeptide is Serine rich endogenous peptide 1 (Arabidopsis thaliana (Mouse-ear cress)).